A 696-amino-acid chain; its full sequence is MVHTVQAECCGKTITIETGKIAKQASGAVMIKSGDTMVLVTAVAMKSAKEGQGFFPLTVNYQEKAYAGGRIPGSFFKREGRPSDNETLTCRLIDRPIRPLFPEGFLNDTQVMATVVSADKDNDPAILSMIGASAALMVSDCPFAGPIAGVKVGRVNGAFIANPTAEELEKSDLEIVIAASQEAILMVEGSAAEVSENDLLEAIFFGHAAVQPILAAQLELAKKVGTPKRVILAPVVNEELKARVAALAKEGMKQAVRIKTKVERHLAIDAITAETVAALAAEFEGSEKEVKGFIEDLEYDLVREHIIKDGQRIDGRDTKTIRAISTEVSLLPRAHGSALFTRGETQSIVAATLGTSVDEQRIDSLYGDSRKKFMLHYNFPPYSVGETSFRLAPGRREIGHGMLAERALQQVLPKHDDFPYTIRIVSDITESNGSSSMATVCGGSLSMMDAGIPIKAPVAGIAMGLIKEGDDFAILSDILGDEDHLGDMDFKVAGTAEGVTALQMDIKIGGVTREIMSAALAQAKAGRIHILGEMAKTIAASRGDLSAFAPRITTIWVKVDKIRDVIGSGGKNIRSVTEATGVSIDIDDTGKINIASTNKEACDLAIKMIRNLTAEAEEGKLYMGTVKKIMEFGAFVEIFPGTDGLVHVSELDTERVKNVSDILKEGDKVLVKCIGIDKQGKIKLSRKEALGQTFTE.

Asp-483 and Asp-489 together coordinate Mg(2+). The 60-residue stretch at 550-609 (PRITTIWVKVDKIRDVIGSGGKNIRSVTEATGVSIDIDDTGKINIASTNKEACDLAIKMI) folds into the KH domain. In terms of domain architecture, S1 motif spans 619 to 687 (GKLYMGTVKK…KQGKIKLSRK (69 aa)).

The protein belongs to the polyribonucleotide nucleotidyltransferase family. The cofactor is Mg(2+).

Its subcellular location is the cytoplasm. The catalysed reaction is RNA(n+1) + phosphate = RNA(n) + a ribonucleoside 5'-diphosphate. In terms of biological role, involved in mRNA degradation. Catalyzes the phosphorolysis of single-stranded polyribonucleotides processively in the 3'- to 5'-direction. This chain is Polyribonucleotide nucleotidyltransferase, found in Geobacter sp. (strain M21).